A 326-amino-acid polypeptide reads, in one-letter code: Beta-ketoacyl-[acyl-carrier-protein] synthase III (326 aa).

Active-site residues include Cys-112 and His-251. The ACP-binding stretch occupies residues 252-256 (QANSR). Asn-281 is a catalytic residue.

The protein belongs to the thiolase-like superfamily. FabH family. In terms of assembly, homodimer.

The protein localises to the cytoplasm. The catalysed reaction is malonyl-[ACP] + acetyl-CoA + H(+) = 3-oxobutanoyl-[ACP] + CO2 + CoA. The protein operates within lipid metabolism; fatty acid biosynthesis. Its function is as follows. Catalyzes the condensation reaction of fatty acid synthesis by the addition to an acyl acceptor of two carbons from malonyl-ACP. Catalyzes the first condensation reaction which initiates fatty acid synthesis and may therefore play a role in governing the total rate of fatty acid production. Possesses both acetoacetyl-ACP synthase and acetyl transacylase activities. Its substrate specificity determines the biosynthesis of branched-chain and/or straight-chain of fatty acids. The chain is Beta-ketoacyl-[acyl-carrier-protein] synthase III from Clostridium botulinum (strain Kyoto / Type A2).